Reading from the N-terminus, the 363-residue chain is Aminopyrrolnitrin oxygenase PrnD (363 aa).

The Rieske domain occupies 29–137; that stretch reads WYVAMRSNEL…TAERYGYVWV (109 aa). [2Fe-2S] cluster is bound by residues Cys69, His71, Cys88, and His91.

In terms of assembly, homodimer. [2Fe-2S] cluster is required as a cofactor. Requires Fe cation as cofactor. It depends on FMN as a cofactor.

The enzyme catalyses aminopyrrolnitrin + NADPH + 2 O2 + H(+) = pyrrolnitrin + NADP(+) + 2 H2O. It functions in the pathway antibiotic biosynthesis. Involved in the biosynthesis of the antifungal antibiotic pyrrolnitrin (PRN). Catalyzes the oxidation of the amino group of aminopyrrolnitrin (APRN) to a nitro group to form PRN. It has high substrate specificity toward physiological substrate aminopyrrolnitrin, p-aminobenzylamine (pABA), p-aminobenzyl alcohol, and p-aminophenyl alanine. The chain is Aminopyrrolnitrin oxygenase PrnD (prnD) from Pseudomonas fluorescens.